Reading from the N-terminus, the 150-residue chain is Ribonuclease K6 (150 aa).

The signal sequence occupies residues 1 to 23; that stretch reads MVLCFPLLLLVLVLWGQVCPLHA. The Proton acceptor role is filled by H38. 4 disulfide bridges follow: C46–C104, C60–C114, C78–C129, and C85–C92. N55 is a glycosylation site (N-linked (GlcNAc...) asparagine). Substrate-binding positions include 61-65 and K86; that span reads KPQNT. A glycan (N-linked (GlcNAc...) asparagine) is linked at N100. R105 lines the substrate pocket. The active-site Proton donor is the H145.

The protein belongs to the pancreatic ribonuclease family. Interacts (via N-terminus) with bacterial lipopolysaccharide (LPS).

It localises to the secreted. The protein localises to the lysosome. It is found in the cytoplasmic granule. In terms of biological role, ribonuclease which shows a preference for the pyrimidines uridine and cytosine. Has potent antibacterial activity against a range of Gram-positive and Gram-negative bacteria, including P.aeruginosa, A.baumanii, M.luteus, S.aureus, E.faecalis, E.faecium, S.saprophyticus and E.coli. Causes loss of bacterial membrane integrity, and also promotes agglutination of Gram-negative bacteria. Probably contributes to urinary tract sterility. Bactericidal activity is independent of RNase activity. The polypeptide is Ribonuclease K6 (RNASE6) (Aotus trivirgatus (Three-striped night monkey)).